The primary structure comprises 115 residues: NADH-ubiquinone oxidoreductase chain 3 (115 aa).

3 helical membrane passes run 3-23, 55-75, and 84-104; these read VMLA…IAFW, FFLV…LLPL, and LPTM…SLAY.

Belongs to the complex I subunit 3 family. Core subunit of respiratory chain NADH dehydrogenase (Complex I) which is composed of 45 different subunits. Interacts with TMEM186. Interacts with TMEM242.

Its subcellular location is the mitochondrion inner membrane. The catalysed reaction is a ubiquinone + NADH + 5 H(+)(in) = a ubiquinol + NAD(+) + 4 H(+)(out). Its function is as follows. Core subunit of the mitochondrial membrane respiratory chain NADH dehydrogenase (Complex I) which catalyzes electron transfer from NADH through the respiratory chain, using ubiquinone as an electron acceptor. Essential for the catalytic activity of complex I. The sequence is that of NADH-ubiquinone oxidoreductase chain 3 from Felis catus (Cat).